The sequence spans 196 residues: MNRTAKISRKTKETDITLELNLDGTGIAEIETGIGFLDHMVQSFAKHGFFDLTIKVKGDLYVDSHHTVEDTGIVLGQAIKQALDEKIGIRRYGSFLLPMDETLVLCAIDLSGRPYLNYQAQLTCEKLGYMDTELVKEFFYAISYSAGMNLHIKQMDGNNNHHIVEAMFKAFAKALDEASGIDPRIQGVLSTKGTVE.

The protein belongs to the imidazoleglycerol-phosphate dehydratase family.

It localises to the cytoplasm. It catalyses the reaction D-erythro-1-(imidazol-4-yl)glycerol 3-phosphate = 3-(imidazol-4-yl)-2-oxopropyl phosphate + H2O. It participates in amino-acid biosynthesis; L-histidine biosynthesis; L-histidine from 5-phospho-alpha-D-ribose 1-diphosphate: step 6/9. The protein is Imidazoleglycerol-phosphate dehydratase of Lachnoclostridium phytofermentans (strain ATCC 700394 / DSM 18823 / ISDg) (Clostridium phytofermentans).